Reading from the N-terminus, the 193-residue chain is Rho-related GTP-binding protein RhoA-C (193 aa).

Residues 12 to 19 (GDGACGKT), 30 to 37 (FPEVYVPT), 59 to 63 (DTAGQ), 117 to 120 (NKKD), and 160 to 162 (SAK) contribute to the GTP site. The (Microbial infection) O-linked (GlcNAc) tyrosine; by Yersinia Afp18 glycan is linked to Y34. C190 is modified (cysteine methyl ester). C190 carries S-geranylgeranyl cysteine lipidation. Residues 191–193 (LLL) constitute a propeptide, removed in mature form.

The protein belongs to the small GTPase superfamily. Rho family. (Microbial infection) Glycosylated at Tyr-34 by Yersinia ruckeri toxin Afp18. Mono-O-GlcNAcylation by Afp18 inhibits RhoA activation by guanine nucleotide exchange factors and blocks RhoA signaling.

The protein resides in the cell membrane. Regulates a signal transduction pathway linking plasma membrane receptors to the assembly of focal adhesions and actin stress fibers. This Danio rerio (Zebrafish) protein is Rho-related GTP-binding protein RhoA-C.